The following is a 511-amino-acid chain: Zinc finger CCCH-type with G patch domain-containing protein (511 aa).

The C3H1-type zinc finger occupies 157–180 (PCSYYLEGECRFDEARCRYSHGAL). A disordered region spans residues 254–281 (DQEDELTSEDSSSVNDGSSDEEESDMDD). Residues 271–281 (SSDEEESDMDD) show a composition bias toward acidic residues. The region spanning 311–357 (TRGIGSKLMEKMGYIHGTGLGSDGRGIVTPVSAQILPKGRSLDACME) is the G-patch domain. Disordered regions lie at residues 409-433 (GSDN…QHST) and 478-511 (MHNQ…MFEF). Residues 414-425 (QQAEPEAKKAKA) show a composition bias toward basic and acidic residues. The span at 478–493 (MHNQKQELATLQAQER) shows a compositional bias: polar residues. Residues 494–511 (SLSKEQQTRKSKNKMFEF) show a composition bias toward basic and acidic residues.

The protein localises to the nucleus. In terms of biological role, transcription repressor. This Drosophila ananassae (Fruit fly) protein is Zinc finger CCCH-type with G patch domain-containing protein.